A 60-amino-acid chain; its full sequence is MPITDLHCPRCGSDVKMGLPMGATVKSVTAASRQEPTSDTQKVRTVECRNDHEFFVRFEW.

The C4-type; atypical zinc finger occupies 8–52; sequence CPRCGSDVKMGLPMGATVKSVTAASRQEPTSDTQKVRTVECRNDH.

It belongs to the Brz family.

Its function is as follows. Activates transcription of bacteriorhodopsin (bop) and phytoene synthase (crtB1). May interact with DNA or RNA via the zinc finger motif. The chain is Transcriptional regulator Brz (brz) from Halobacterium salinarum (strain ATCC 29341 / DSM 671 / R1).